Here is a 155-residue protein sequence, read N- to C-terminus: Cytochrome c-type biogenesis protein CcmE (155 aa).

Over 1–8 (MNPRRKKR) the chain is Cytoplasmic. A helical; Signal-anchor for type II membrane protein membrane pass occupies residues 9–29 (LLITSLLAVALSLAVGLVLFA). Topologically, residues 30–155 (LQQNIDLFYT…GMDNFKANNK (126 aa)) are periplasmic. Residues His131 and Tyr135 each coordinate heme.

This sequence belongs to the CcmE/CycJ family.

The protein localises to the cell inner membrane. Its function is as follows. Heme chaperone required for the biogenesis of c-type cytochromes. Transiently binds heme delivered by CcmC and transfers the heme to apo-cytochromes in a process facilitated by CcmF and CcmH. This is Cytochrome c-type biogenesis protein CcmE from Psychromonas ingrahamii (strain DSM 17664 / CCUG 51855 / 37).